A 769-amino-acid polypeptide reads, in one-letter code: Gephyrin (769 aa).

The tract at residues 14–153 is MPT Mo-transferase; that stretch reads QIRVGVLTVS…LPGSKKGSQE (140 aa). The interval 140-349 is interaction with GABARAP; that stretch reads LIINLPGSKK…VDITKVARRH (210 aa). 2 disordered regions span residues 181 to 232 and 260 to 299; these read DELE…DSSS and TASLSTTPSESPRAQATSRLSTASCPTPKQIRRPDESKGV. Over residues 187 to 199 the composition is skewed to pro residues; sequence PSPPPPLSPPPTT. 2 positions are modified to phosphoserine: S188 and S194. A Phosphothreonine modification is found at T198. Phosphoserine is present on S200. A lipid anchor (S-palmitoyl cysteine) is attached at C212. Residues 261 to 286 are compositionally biased toward polar residues; the sequence is ASLSTTPSESPRAQATSRLSTASCPT. S262 carries the phosphoserine modification. Phosphothreonine is present on residues T265 and T266. Residues S268 and S270 each carry the phosphoserine modification. C284 carries S-palmitoyl cysteine lipidation. Residues 327–769 form an MPT adenylyltransferase region; it reads SSKENILRAS…VVDVMVIGRL (443 aa). S338 carries the phosphoserine modification.

In the N-terminal section; belongs to the MoaB/Mog family. This sequence in the C-terminal section; belongs to the MoeA family. In terms of assembly, homotrimer, homodimer and homooligomer. Interacts with SRGAP2 (via SH3 domain). Interacts with GLRB. Interacts with GABARAP. Interacts with GABRA3. GABRA3 and GLRB occupy overlapping binding sites. Interacts with ARHGAP32; IQSEC3, INSYN1 and INSYN2A. It depends on Mg(2+) as a cofactor. Post-translationally, palmitoylated. Palmitoylation is stimulated by GABA type A receptors activity. Palmitoylation by ZDHHC12 regulates clustering at synapses.

The protein resides in the postsynaptic cell membrane. It localises to the cell membrane. It is found in the cytoplasm. The protein localises to the cytosol. Its subcellular location is the cytoskeleton. The protein resides in the cell projection. It localises to the dendrite. It is found in the postsynaptic density. The catalysed reaction is molybdopterin + ATP + H(+) = adenylyl-molybdopterin + diphosphate. It catalyses the reaction adenylyl-molybdopterin + molybdate = Mo-molybdopterin + AMP + H(+). It functions in the pathway cofactor biosynthesis; molybdopterin biosynthesis. Its activity is regulated as follows. Inhibited by copper and tungsten. In terms of biological role, microtubule-associated protein involved in membrane protein-cytoskeleton interactions. It is thought to anchor the inhibitory glycine receptor (GLYR) to subsynaptic microtubules. Acts as a major instructive molecule at inhibitory synapses, where it also clusters GABA type A receptors. Its function is as follows. Also has a catalytic activity and catalyzes two steps in the biosynthesis of the molybdenum cofactor. In the first step, molybdopterin is adenylated. Subsequently, molybdate is inserted into adenylated molybdopterin and AMP is released. This is Gephyrin (Gphn) from Mus musculus (Mouse).